The sequence spans 880 residues: GAS2-like protein 2 (880 aa).

The Calponin-homology (CH) domain occupies 32 to 159 (EAMKEDLAEW…CLLELGRRAW (128 aa)). Residues 180–200 (RRELALPPPDPSPPAPPRRQP) are disordered. Pro residues predominate over residues 185 to 198 (LPPPDPSPPAPPRR). The GAR domain maps to 201–273 (CHFRNLDQMV…HYLDKHDPCR (73 aa)). Disordered stretches follow at residues 283-360 (SFLK…MAPF), 372-437 (WRQP…NPTP), 489-533 (ESVR…ELGR), and 676-880 (APTG…ESWV). A compositionally biased stretch (polar residues) spans 301–315 (GPSQTQPTMTISRSQ). The tract at residues 438–880 (QRLRAIEATT…PLPPEEESWV (443 aa)) is interaction with ADORA2A. Residues 506–515 (RLPPARPPTP) show a composition bias toward pro residues. The segment covering 725 to 734 (QDCSASTVSA) has biased composition (polar residues). Composition is skewed to basic residues over residues 757–767 (KGRRTLRKPKR) and 774–785 (LKLRPRIRPRRD).

The protein belongs to the GAS2 family. Interacts with ADORA2A (via its cytoplasmic C-terminal domain). Interacts with GNAS, GNAL, GNAQ, and GNA13. Interacts with MAPRE1. Expressed in bronchial and nasal epithelial cells (at protein level). Expressed in brain, kidney, lung, testis, fallopian tubes, and skeletal muscle. Expressed at low levels in stomach and colon.

It is found in the cytoplasm. The protein resides in the cytoskeleton. Its subcellular location is the cell membrane. The protein localises to the stress fiber. It localises to the cilium basal body. In terms of biological role, involved in the cross-linking of microtubules and microfilaments. Regulates microtubule dynamics and stability by interacting with microtubule plus-end tracking proteins, such as MAPRE1, to regulate microtubule growth along actin stress fibers. Enhances ADORA2-mediated adenylyl cyclase activation by acting as a scaffold to recruit trimeric G-protein complexes to ADORA2A. Regulates ciliary orientation and performance in cells located in the airway. The polypeptide is GAS2-like protein 2 (GAS2L2) (Homo sapiens (Human)).